Reading from the N-terminus, the 399-residue chain is Probable dual-specificity RNA methyltransferase RlmN (399 aa).

Glu102 functions as the Proton acceptor in the catalytic mechanism. One can recognise a Radical SAM core domain in the interval 108-385 (YLDRATVCVS…CTVRVERGVA (278 aa)). A disulfide bridge connects residues Cys115 and Cys390. [4Fe-4S] cluster is bound by residues Cys122, Cys126, and Cys129. S-adenosyl-L-methionine contacts are provided by residues 207–208 (GE), Ser239, 262–264 (SLH), and Asn347. Cys390 serves as the catalytic S-methylcysteine intermediate.

This sequence belongs to the radical SAM superfamily. RlmN family. The cofactor is [4Fe-4S] cluster.

It localises to the cytoplasm. The enzyme catalyses adenosine(2503) in 23S rRNA + 2 reduced [2Fe-2S]-[ferredoxin] + 2 S-adenosyl-L-methionine = 2-methyladenosine(2503) in 23S rRNA + 5'-deoxyadenosine + L-methionine + 2 oxidized [2Fe-2S]-[ferredoxin] + S-adenosyl-L-homocysteine. It carries out the reaction adenosine(37) in tRNA + 2 reduced [2Fe-2S]-[ferredoxin] + 2 S-adenosyl-L-methionine = 2-methyladenosine(37) in tRNA + 5'-deoxyadenosine + L-methionine + 2 oxidized [2Fe-2S]-[ferredoxin] + S-adenosyl-L-homocysteine. In terms of biological role, specifically methylates position 2 of adenine 2503 in 23S rRNA and position 2 of adenine 37 in tRNAs. The polypeptide is Probable dual-specificity RNA methyltransferase RlmN (Roseiflexus castenholzii (strain DSM 13941 / HLO8)).